Here is a 201-residue protein sequence, read N- to C-terminus: Dephospho-CoA kinase (201 aa).

The DPCK domain maps to 3 to 201 (VIGLTGGIAS…WKERIEKNPR (199 aa)). An ATP-binding site is contributed by 11–16 (ASGKST).

This sequence belongs to the CoaE family.

Its subcellular location is the cytoplasm. The enzyme catalyses 3'-dephospho-CoA + ATP = ADP + CoA + H(+). The protein operates within cofactor biosynthesis; coenzyme A biosynthesis; CoA from (R)-pantothenate: step 5/5. Its function is as follows. Catalyzes the phosphorylation of the 3'-hydroxyl group of dephosphocoenzyme A to form coenzyme A. This Geobacter metallireducens (strain ATCC 53774 / DSM 7210 / GS-15) protein is Dephospho-CoA kinase.